The chain runs to 316 residues: Ribosomal RNA small subunit methyltransferase H (316 aa).

S-adenosyl-L-methionine-binding positions include 35-37, Asp-55, Phe-84, Asp-105, and Gln-112; that span reads SGH.

This sequence belongs to the methyltransferase superfamily. RsmH family.

It is found in the cytoplasm. It catalyses the reaction cytidine(1402) in 16S rRNA + S-adenosyl-L-methionine = N(4)-methylcytidine(1402) in 16S rRNA + S-adenosyl-L-homocysteine + H(+). In terms of biological role, specifically methylates the N4 position of cytidine in position 1402 (C1402) of 16S rRNA. The polypeptide is Ribosomal RNA small subunit methyltransferase H (Streptococcus pyogenes serotype M18 (strain MGAS8232)).